The following is a 369-amino-acid chain: UDP-3-O-acylglucosamine N-acyltransferase (369 aa).

The active-site Proton acceptor is the His252. The segment at 348 to 369 is disordered; sequence ERRQRGENNAPAQNKQDEEKSS.

The protein belongs to the transferase hexapeptide repeat family. LpxD subfamily. Homotrimer.

The catalysed reaction is a UDP-3-O-[(3R)-3-hydroxyacyl]-alpha-D-glucosamine + a (3R)-hydroxyacyl-[ACP] = a UDP-2-N,3-O-bis[(3R)-3-hydroxyacyl]-alpha-D-glucosamine + holo-[ACP] + H(+). It functions in the pathway bacterial outer membrane biogenesis; LPS lipid A biosynthesis. Its function is as follows. Catalyzes the N-acylation of UDP-3-O-acylglucosamine using 3-hydroxyacyl-ACP as the acyl donor. Is involved in the biosynthesis of lipid A, a phosphorylated glycolipid that anchors the lipopolysaccharide to the outer membrane of the cell. The protein is UDP-3-O-acylglucosamine N-acyltransferase of Cupriavidus metallidurans (strain ATCC 43123 / DSM 2839 / NBRC 102507 / CH34) (Ralstonia metallidurans).